Reading from the N-terminus, the 200-residue chain is MDRTGIFAGDDPFAIAAGWLAEAEPQEPNDPNAIALATVDAAGLPNVRMVLLKEIEAEAFVFYTNYGSQKAVEIETSGKAAFVLHWKSLRRQIRVRGLVEREEGAQADAYYASRSLKSRLGAWASEQSRPLASRTSLLAEVARVTARFGTNPPRPAFWGGFRIRPLEIEFWADGAFRLHDRFRWRRNSLSDGWSIERLNP.

FMN is bound by residues 48-53 (RMVLLK), 63-64 (YT), Lys70, and Gln92. Residue Lys53 coordinates substrate. Substrate contacts are provided by Tyr110, Arg114, and Ser118. FMN is bound by residues 127-128 (QS) and Trp171. Residue 177–179 (RLH) coordinates substrate. Arg181 is a binding site for FMN.

It belongs to the pyridoxamine 5'-phosphate oxidase family. As to quaternary structure, homodimer. It depends on FMN as a cofactor.

It carries out the reaction pyridoxamine 5'-phosphate + O2 + H2O = pyridoxal 5'-phosphate + H2O2 + NH4(+). The catalysed reaction is pyridoxine 5'-phosphate + O2 = pyridoxal 5'-phosphate + H2O2. It participates in cofactor metabolism; pyridoxal 5'-phosphate salvage; pyridoxal 5'-phosphate from pyridoxamine 5'-phosphate: step 1/1. It functions in the pathway cofactor metabolism; pyridoxal 5'-phosphate salvage; pyridoxal 5'-phosphate from pyridoxine 5'-phosphate: step 1/1. Catalyzes the oxidation of either pyridoxine 5'-phosphate (PNP) or pyridoxamine 5'-phosphate (PMP) into pyridoxal 5'-phosphate (PLP). The sequence is that of Pyridoxine/pyridoxamine 5'-phosphate oxidase from Cereibacter sphaeroides (strain ATCC 17023 / DSM 158 / JCM 6121 / CCUG 31486 / LMG 2827 / NBRC 12203 / NCIMB 8253 / ATH 2.4.1.) (Rhodobacter sphaeroides).